A 506-amino-acid chain; its full sequence is Cysteine--tRNA ligase (506 aa).

Cysteine 34 is a Zn(2+) binding site. The short motif at 36-46 (PTVYDFAHIGN) is the 'HIGH' region element. Residues cysteine 230, histidine 269, and glutamate 273 each coordinate Zn(2+). The short motif at 302 to 306 (KMSKS) is the 'KMSKS' region element. Lysine 305 contacts ATP.

It belongs to the class-I aminoacyl-tRNA synthetase family. As to quaternary structure, monomer. The cofactor is Zn(2+).

It localises to the cytoplasm. The enzyme catalyses tRNA(Cys) + L-cysteine + ATP = L-cysteinyl-tRNA(Cys) + AMP + diphosphate. This chain is Cysteine--tRNA ligase, found in Brucella ovis (strain ATCC 25840 / 63/290 / NCTC 10512).